Reading from the N-terminus, the 507-residue chain is ATP synthase subunit alpha (507 aa).

Residue 170 to 177 coordinates ATP; that stretch reads GDRQTGKT.

This sequence belongs to the ATPase alpha/beta chains family. As to quaternary structure, F-type ATPases have 2 components, CF(1) - the catalytic core - and CF(0) - the membrane proton channel. CF(1) has five subunits: alpha(3), beta(3), gamma(1), delta(1), epsilon(1). CF(0) has three main subunits: a(1), b(2) and c(9-12). The alpha and beta chains form an alternating ring which encloses part of the gamma chain. CF(1) is attached to CF(0) by a central stalk formed by the gamma and epsilon chains, while a peripheral stalk is formed by the delta and b chains.

It localises to the cell inner membrane. The enzyme catalyses ATP + H2O + 4 H(+)(in) = ADP + phosphate + 5 H(+)(out). Produces ATP from ADP in the presence of a proton gradient across the membrane. The alpha chain is a regulatory subunit. In Fervidobacterium nodosum (strain ATCC 35602 / DSM 5306 / Rt17-B1), this protein is ATP synthase subunit alpha.